Reading from the N-terminus, the 522-residue chain is Na(+)/H(+) antiporter NhaB (522 aa).

A run of 11 helical transmembrane segments spans residues 25-45, 49-69, 87-107, 128-162, 201-221, 237-257, 302-322, 356-376, 388-408, 446-466, and 476-496; these read VFLV…GWLL, FIFT…GMLA, ILAN…IYFM, LSLA…FYGV, LMMH…VGEP, FFFR…VTCI, VFVG…VGLI, LVVF…APVI, LLLF…VFVA, ATPN…SPLI, and MALP…EYVL.

It belongs to the NhaB Na(+)/H(+) (TC 2.A.34) antiporter family.

The protein localises to the cell inner membrane. It carries out the reaction 2 Na(+)(in) + 3 H(+)(out) = 2 Na(+)(out) + 3 H(+)(in). Na(+)/H(+) antiporter that extrudes sodium in exchange for external protons. This is Na(+)/H(+) antiporter NhaB from Actinobacillus succinogenes (strain ATCC 55618 / DSM 22257 / CCUG 43843 / 130Z).